A 213-amino-acid polypeptide reads, in one-letter code: AN1-type zinc finger protein 5 (213 aa).

The A20-type zinc finger occupies 8 to 42 (TPGPMLCSTGCGFYGNPRTNGMCSVCYKEHLQRQQ). Cys14, Cys18, Cys30, and Cys33 together coordinate Zn(2+). A disordered region spans residues 39–149 (QRQQNSGRMS…EEKAPELPKP (111 aa)). The span at 40–66 (RQQNSGRMSPMGTASGSNSPTSDSASV) shows a compositional bias: polar residues. Ser48 and Ser58 each carry phosphoserine. The span at 120-138 (SEPVVTQPSPSVSQPSSSQ) shows a compositional bias: low complexity. Positions 139–148 (SEEKAPELPK) are enriched in basic and acidic residues. Residues 148-194 (KPKKNRCFMCRKKVGLTGFDCRCGNLFCGLHRYSDKHNCPYDYKAEA) form an AN1-type zinc finger. Cys154, Cys157, Cys168, Cys170, Cys175, His178, His184, and Cys186 together coordinate Zn(2+). Position 209 is an N6-acetyllysine (Lys209).

In terms of assembly, homooligomer and/or heterooligomer. Interacts (via A20-type domain) with IKBKG and RIPK1 and with TRAF6 (via AN1-type domain). Interacts with ubiquitin and polyubiquitinated proteins. Identified in a heterotrimeric complex with ubiquitin and SQSTM1, where ZFAND5 and SQSTM1 both interact with the same ubiquitin molecule.

It is found in the cytoplasm. Functionally, involved in protein degradation via the ubiquitin-proteasome system. May act by anchoring ubiquitinated proteins to the proteasome. Plays a role in ubiquitin-mediated protein degradation during muscle atrophy. Plays a role in the regulation of NF-kappa-B activation and apoptosis. Inhibits NF-kappa-B activation triggered by overexpression of RIPK1 and TRAF6 but not of RELA. Also inhibits tumor necrosis factor (TNF), IL-1 and TLR4-induced NF-kappa-B activation in a dose-dependent manner. Overexpression sensitizes cells to TNF-induced apoptosis. Is a potent inhibitory factor for osteoclast differentiation. The chain is AN1-type zinc finger protein 5 (Zfand5) from Rattus norvegicus (Rat).